Here is an 822-residue protein sequence, read N- to C-terminus: Glycerol-3-phosphate acyltransferase (822 aa).

An HXXXXD motif motif is present at residues 306 to 311; the sequence is CHRSHM. Positions 803 to 822 are disordered; the sequence is ASSSAEMEAESQAVEETTQE.

This sequence belongs to the GPAT/DAPAT family.

The protein localises to the cell inner membrane. The catalysed reaction is sn-glycerol 3-phosphate + an acyl-CoA = a 1-acyl-sn-glycero-3-phosphate + CoA. The protein operates within phospholipid metabolism; CDP-diacylglycerol biosynthesis; CDP-diacylglycerol from sn-glycerol 3-phosphate: step 1/3. This is Glycerol-3-phosphate acyltransferase from Pectobacterium carotovorum subsp. carotovorum (strain PC1).